Consider the following 722-residue polypeptide: Glycine--tRNA ligase beta subunit (722 aa).

Belongs to the class-II aminoacyl-tRNA synthetase family. As to quaternary structure, tetramer of two alpha and two beta subunits.

Its subcellular location is the cytoplasm. The catalysed reaction is tRNA(Gly) + glycine + ATP = glycyl-tRNA(Gly) + AMP + diphosphate. The sequence is that of Glycine--tRNA ligase beta subunit (glyS) from Synechocystis sp. (strain ATCC 27184 / PCC 6803 / Kazusa).